A 314-amino-acid chain; its full sequence is Homoserine O-succinyltransferase (314 aa).

The Acyl-thioester intermediate role is filled by Cys142. The substrate site is built by Lys163 and Ser192. Residue His235 is the Proton acceptor of the active site. Glu237 is an active-site residue. Arg249 lines the substrate pocket.

This sequence belongs to the MetA family.

The protein localises to the cytoplasm. The catalysed reaction is L-homoserine + succinyl-CoA = O-succinyl-L-homoserine + CoA. Its pathway is amino-acid biosynthesis; L-methionine biosynthesis via de novo pathway; O-succinyl-L-homoserine from L-homoserine: step 1/1. In terms of biological role, transfers a succinyl group from succinyl-CoA to L-homoserine, forming succinyl-L-homoserine. The sequence is that of Homoserine O-succinyltransferase from Photobacterium profundum (strain SS9).